The following is a 504-amino-acid chain: Anaerobic nitric oxide reductase transcription regulator NorR (504 aa).

Asp-57 carries the 4-aspartylphosphate modification. The Sigma-54 factor interaction domain occupies 187 to 416 (MIGLSPGMTQ…LEHAIHRAVV (230 aa)). ATP-binding positions include 215–222 (GETGTGKE) and 278–287 (ADNGTLFLDE). The segment at residues 479–498 (WAASARMLETDVANLHRLAK) is a DNA-binding region (H-T-H motif).

The protein operates within nitrogen metabolism; nitric oxide reduction. In terms of biological role, required for the expression of anaerobic nitric oxide (NO) reductase, acts as a transcriptional activator for at least the norVW operon. Activation also requires sigma-54. This Escherichia coli (strain SMS-3-5 / SECEC) protein is Anaerobic nitric oxide reductase transcription regulator NorR.